Consider the following 474-residue polypeptide: PTS system N-acetylmuramic acid-specific EIIBC component (474 aa).

The PTS EIIB type-1 domain occupies Met1–Gln89. Topologically, residues Met1 to Pro123 are cytoplasmic. Cys29 functions as the Phosphocysteine intermediate; for EIIB activity in the catalytic mechanism. The PTS EIIC type-1 domain occupies Ala115–Asp474. A helical membrane pass occupies residues Leu124–Val144. Residues Met145–Asp157 are Periplasmic-facing. The chain crosses the membrane as a helical span at residues Ala158–Gly178. Residues Tyr179–Asn180 lie on the Cytoplasmic side of the membrane. A helical membrane pass occupies residues Ala181–Leu201. Topologically, residues Gly202–Asp217 are periplasmic. The helical transmembrane segment at Phe218–Ala238 threads the bilayer. Residues Cys239–Ser260 lie on the Cytoplasmic side of the membrane. Residues Leu261 to Trp281 form a helical membrane-spanning segment. The Periplasmic portion of the chain corresponds to Leu282–Ala301. Residues Val302 to Val322 form a helical membrane-spanning segment. At Tyr323–Ser334 the chain is on the cytoplasmic side. Residues Leu335–Trp355 traverse the membrane as a helical segment. Over Arg356–Arg368 the chain is Periplasmic. The helical transmembrane segment at Gly369–Pro389 threads the bilayer. The Cytoplasmic segment spans residues Arg390–Pro393. The chain crosses the membrane as a helical span at residues Phe394 to Trp414. Residues Gly415–Gly440 are Periplasmic-facing. A helical transmembrane segment spans residues Ile441–Ile461. Residues Phe462–Asp474 lie on the Cytoplasmic side of the membrane.

The protein localises to the cell inner membrane. It carries out the reaction N-acetyl-beta-D-muramate(out) + N(pros)-phospho-L-histidyl-[protein] = N-acetyl-beta-D-muramate 6-phosphate(in) + L-histidyl-[protein]. In terms of biological role, the phosphoenolpyruvate-dependent sugar phosphotransferase system (sugar PTS), a major carbohydrate active transport system, catalyzes the phosphorylation of incoming sugar substrates concomitantly with their translocation across the cell membrane. This system is involved in N-acetylmuramic acid (MurNAc) transport, yielding cytoplasmic MurNAc-6-P. Is also able to take up anhydro-N-acetylmuramic acid (anhMurNAc), but cannot phosphorylate the carbon 6, probably because of the 1,6-anhydro ring. This is PTS system N-acetylmuramic acid-specific EIIBC component (murP) from Shigella flexneri.